Here is a 203-residue protein sequence, read N- to C-terminus: UPF0637 protein SSP1683 (203 aa).

This sequence belongs to the UPF0637 family.

This is UPF0637 protein SSP1683 from Staphylococcus saprophyticus subsp. saprophyticus (strain ATCC 15305 / DSM 20229 / NCIMB 8711 / NCTC 7292 / S-41).